Here is a 207-residue protein sequence, read N- to C-terminus: MSRHSTSSVTETTAKNMLWGSELNQEKQTCTFRGQGEKKDSCKLLLSTICLGEKAKEEVNRVEVLSQEGRKPPITIATLKASVLPMVTVSGIELSPPVTFRLRTGSGPVFLSGLECYETSDLTWEDDEEEEEEEEEEDEDEDADISLEEIPVKQVKRVAPQKQMSIAKKKKVEKEEDETVVRPSPQDKSPWKKEKSTPRAKKPVTKK.

Over residues 1–15 the composition is skewed to polar residues; the sequence is MSRHSTSSVTETTAK. 2 disordered regions span residues 1–20 and 121–207; these read MSRHSTSSVTETTAKNMLWG and DLTW…VTKK. Residues 123–147 show a composition bias toward acidic residues; that stretch reads TWEDDEEEEEEEEEEDEDEDADISL. The segment at 129–152 is acidic tract A2; it reads EEEEEEEEEDEDEDADISLEEIPV. The Bipartite nuclear localization signal motif lies at 165 to 180; the sequence is SIAKKKKVEKEEDETV. The segment covering 198–207 has biased composition (basic residues); that stretch reads PRAKKPVTKK.

It belongs to the nucleoplasmin family. In terms of assembly, homopentamer, when bound to H2A-H2B dimers only. Homodecamer of two stacked pentamers, when bound to H2A-H2B dimers and H3-H4 tetramers simultaneously. In terms of tissue distribution, ovary specific.

It is found in the nucleus. Functionally, core histones chaperone involved in chromatin reprogramming, specially during fertilization and early embryonic development. Probably involved in sperm DNA decondensation during fertilization. The polypeptide is Nucleoplasmin-2 (Npm2) (Mus musculus (Mouse)).